A 247-amino-acid polypeptide reads, in one-letter code: MINPSSMENFNMLYQLSKVEVGQHFYWQIGDFEVHGQVLLVSWFVMTIIISLSIFGTRNLQTIPTGTQNFVEYVLEFIRDLAKTQIGEEDYRSWVPFIGTIFLFIFVSNWSGALVPWKLIEIPNGELAAPTNDINTTAALALLTSISYFYAGFSKKGLRYFKRYISPTPVLLPINLLEDFTKPLSLSFRLFGNILADELVVGVLITLVPLVVPMPLMLLGLFTSAIQALIFATLAAAYIGEAVEDHH.

A run of 5 helical transmembrane segments spans residues 36–56, 95–115, 134–154, 199–219, and 220–240; these read GQVLLVSWFVMTIIISLSIFG, VPFIGTIFLFIFVSNWSGALV, INTTAALALLTSISYFYAGFS, LVVGVLITLVPLVVPMPLMLL, and GLFTSAIQALIFATLAAAYIG.

The protein belongs to the ATPase A chain family. As to quaternary structure, F-type ATPases have 2 components, CF(1) - the catalytic core - and CF(0) - the membrane proton channel. CF(1) has five subunits: alpha(3), beta(3), gamma(1), delta(1), epsilon(1). CF(0) has four main subunits: a, b, b' and c.

Its subcellular location is the plastid. The protein localises to the chloroplast thylakoid membrane. Functionally, key component of the proton channel; it plays a direct role in the translocation of protons across the membrane. The sequence is that of ATP synthase subunit a, chloroplastic from Mesostigma viride (Green alga).